Consider the following 639-residue polypeptide: Putative cyclic beta-1,2-glucan modification protein (639 aa).

Helical transmembrane passes span 34–54 (ALFT…IVRW), 69–89 (PAWT…ALFG), 96–116 (LLIA…QVFL), 144–164 (WTAV…ALLL), 185–205 (FALP…FSWI), and 227–247 (FALA…AGYM).

It is found in the cell membrane. The chain is Putative cyclic beta-1,2-glucan modification protein (cgmA) from Rhizobium meliloti (strain 1021) (Ensifer meliloti).